The chain runs to 129 residues: Glycine cleavage system H protein (129 aa).

One can recognise a Lipoyl-binding domain in the interval 24 to 106; it reads SYTVGITEHA…YGDGWFFRIM (83 aa). Lysine 65 carries the N6-lipoyllysine modification.

This sequence belongs to the GcvH family. The glycine cleavage system is composed of four proteins: P, T, L and H. It depends on (R)-lipoate as a cofactor.

In terms of biological role, the glycine cleavage system catalyzes the degradation of glycine. The H protein shuttles the methylamine group of glycine from the P protein to the T protein. This chain is Glycine cleavage system H protein, found in Shewanella denitrificans (strain OS217 / ATCC BAA-1090 / DSM 15013).